The following is a 181-amino-acid chain: Adenylate kinase (181 aa).

ATP is bound at residue 10-15 (GAGKGT). Residues 30–59 (STGDLFRANISQGTELGKQAQEYMDAGKLV) are NMP. Residues Thr-31, Arg-36, 57–59 (KLV), 85–88 (GFPR), and Gln-92 contribute to the AMP site. Residues 126-132 (SRGRNDD) form an LID region. Position 127 (Arg-127) interacts with ATP. Positions 129 and 140 each coordinate AMP. Gly-166 serves as a coordination point for ATP.

It belongs to the adenylate kinase family. As to quaternary structure, monomer.

Its subcellular location is the cytoplasm. The enzyme catalyses AMP + ATP = 2 ADP. It participates in purine metabolism; AMP biosynthesis via salvage pathway; AMP from ADP: step 1/1. Catalyzes the reversible transfer of the terminal phosphate group between ATP and AMP. Plays an important role in cellular energy homeostasis and in adenine nucleotide metabolism. The sequence is that of Adenylate kinase from Corynebacterium urealyticum (strain ATCC 43042 / DSM 7109).